A 522-amino-acid chain; its full sequence is O-fucosyltransferase 38 (522 aa).

A helical; Signal-anchor for type II membrane protein membrane pass occupies residues 26–46; that stretch reads AISLYLIFVFAFTIWVLVFSS. Residues 54-67 show a composition bias toward basic and acidic residues; it reads DHTKHQQQHHRDLI. Residues 54–73 are disordered; it reads DHTKHQQQHHRDLIDSESFP. An N-linked (GlcNAc...) asparagine glycan is attached at Asn-147. 284 to 286 lines the substrate pocket; the sequence is HLR. Asn-325 carries an N-linked (GlcNAc...) asparagine glycan. The segment at 475 to 496 is disordered; the sequence is HKDRQGAPRRRKGPTQGIKGRA.

It belongs to the glycosyltransferase GT106 family.

The protein localises to the membrane. The protein operates within glycan metabolism. The protein is O-fucosyltransferase 38 of Arabidopsis thaliana (Mouse-ear cress).